The primary structure comprises 237 residues: RNA chaperone ProQ (237 aa).

Residues 106–188 (AKARVQAQRA…QPRPVPVTDI (83 aa)) form a disordered region. A compositionally biased stretch (basic and acidic residues) spans 146-158 (PRREAGAAPENRK).

It belongs to the ProQ family.

It localises to the cytoplasm. RNA chaperone with significant RNA binding, RNA strand exchange and RNA duplexing activities. May regulate ProP activity through an RNA-based, post-transcriptional mechanism. The sequence is that of RNA chaperone ProQ from Yersinia pseudotuberculosis serotype O:1b (strain IP 31758).